Reading from the N-terminus, the 113-residue chain is Gamma-glutamylcyclotransferase family protein YtfP (113 aa).

It belongs to the gamma-glutamylcyclotransferase family.

In Escherichia coli O157:H7, this protein is Gamma-glutamylcyclotransferase family protein YtfP (ytfP).